Here is a 901-residue protein sequence, read N- to C-terminus: HTH-type transcriptional regulator MalT (901 aa).

39 to 46 (SPAGYGKT) serves as a coordination point for ATP. Positions 829–894 (ELIRTSPLTQ…DAVQHAQQLL (66 aa)) constitute an HTH luxR-type domain. The H-T-H motif DNA-binding region spans 853 to 872 (NEQIAGELEVAATTIKTHIR).

This sequence belongs to the MalT family. In terms of assembly, monomer in solution. Oligomerizes to an active state in the presence of the positive effectors ATP and maltotriose.

Its activity is regulated as follows. Activated by ATP and maltotriose, which are both required for DNA binding. Positively regulates the transcription of the maltose regulon whose gene products are responsible for uptake and catabolism of malto-oligosaccharides. Specifically binds to the promoter region of its target genes, recognizing a short DNA motif called the MalT box. In Escherichia coli (strain ATCC 8739 / DSM 1576 / NBRC 3972 / NCIMB 8545 / WDCM 00012 / Crooks), this protein is HTH-type transcriptional regulator MalT.